A 249-amino-acid polypeptide reads, in one-letter code: Phosphate import ATP-binding protein PstB 2 (249 aa).

An ABC transporter domain is found at 4 to 244; it reads IEVRDLDLFY…PKDKRTEDYI (241 aa). 36–43 lines the ATP pocket; sequence GPSGCGKS.

The protein belongs to the ABC transporter superfamily. Phosphate importer (TC 3.A.1.7) family. As to quaternary structure, the complex is composed of two ATP-binding proteins (PstB), two transmembrane proteins (PstC and PstA) and a solute-binding protein (PstS).

Its subcellular location is the cell membrane. It carries out the reaction phosphate(out) + ATP + H2O = ADP + 2 phosphate(in) + H(+). Part of the ABC transporter complex PstSACB involved in phosphate import. Responsible for energy coupling to the transport system. The protein is Phosphate import ATP-binding protein PstB 2 of Caldanaerobacter subterraneus subsp. tengcongensis (strain DSM 15242 / JCM 11007 / NBRC 100824 / MB4) (Thermoanaerobacter tengcongensis).